Reading from the N-terminus, the 310-residue chain is Ribosomal RNA small subunit methyltransferase H (310 aa).

Residues 32–34, D52, F79, D100, and Q107 contribute to the S-adenosyl-L-methionine site; that span reads GGH.

Belongs to the methyltransferase superfamily. RsmH family.

The protein localises to the cytoplasm. The catalysed reaction is cytidine(1402) in 16S rRNA + S-adenosyl-L-methionine = N(4)-methylcytidine(1402) in 16S rRNA + S-adenosyl-L-homocysteine + H(+). Its function is as follows. Specifically methylates the N4 position of cytidine in position 1402 (C1402) of 16S rRNA. The polypeptide is Ribosomal RNA small subunit methyltransferase H (Bacillus cytotoxicus (strain DSM 22905 / CIP 110041 / 391-98 / NVH 391-98)).